Consider the following 160-residue polypeptide: E3 ubiquitin ligase complex SCF subunit sconC (160 aa).

The interaction with the F-box domain of F-box proteins stretch occupies residues 101-160 (ILAANYLDIKALLDVGCKTVANMIKGKSPEEIRKTFNIQNDFTPEEEDQIRRENEWAEDR).

Belongs to the SKP1 family. Component of the SCF (SKP1-CUL1-F-box protein) E3 ubiquitin ligase complexes.

The protein operates within protein modification; protein ubiquitination. In terms of biological role, essential component of the SCF (SKP1-CUL1-F-box protein) E3 ubiquitin ligase complexes, which mediate the ubiquitination and subsequent proteasomal degradation of target proteins. Controls sulfur metabolite repression, probably by mediating the inactivation or degradation of the metR transcription factor. The sequence is that of E3 ubiquitin ligase complex SCF subunit sconC (sconC) from Talaromyces stipitatus (strain ATCC 10500 / CBS 375.48 / QM 6759 / NRRL 1006) (Penicillium stipitatum).